A 163-amino-acid chain; its full sequence is MIKKLSKLVKDFTLSELRTGMKITAKELVNKKITVQFPEERTPISPRFRGLHALRRYPNGEERCIACKLCEAVCPANAITIESEMRDDGTRRTIVYDIDLFKCIFCGFCEEACPVDAIVETQIFDYAFKSRQGSIMTKERLLEVGSQNEQAINQARLEDAKYK.

4Fe-4S ferredoxin-type domains follow at residues 54 to 84 and 94 to 123; these read LRRYPNGEERCIACKLCEAVCPANAITIESE and IVYDIDLFKCIFCGFCEEACPVDAIVETQI. Residues Cys-64, Cys-67, Cys-70, Cys-74, Cys-103, Cys-106, Cys-109, and Cys-113 each contribute to the [4Fe-4S] cluster site.

Belongs to the complex I 23 kDa subunit family. As to quaternary structure, NDH-1 is composed of 14 different subunits. Subunits NuoA, H, J, K, L, M, N constitute the membrane sector of the complex. It depends on [4Fe-4S] cluster as a cofactor.

It localises to the cell inner membrane. It carries out the reaction a quinone + NADH + 5 H(+)(in) = a quinol + NAD(+) + 4 H(+)(out). Its function is as follows. NDH-1 shuttles electrons from NADH, via FMN and iron-sulfur (Fe-S) centers, to quinones in the respiratory chain. The immediate electron acceptor for the enzyme in this species is believed to be ubiquinone. Couples the redox reaction to proton translocation (for every two electrons transferred, four hydrogen ions are translocated across the cytoplasmic membrane), and thus conserves the redox energy in a proton gradient. This chain is NADH-quinone oxidoreductase subunit I, found in Ruthia magnifica subsp. Calyptogena magnifica.